The chain runs to 413 residues: D-nopaline dehydrogenase (413 aa).

It belongs to the lysopine/nopaline/octopine/opine/vitopine dehydrogenases family. In terms of assembly, homotetramer.

It carries out the reaction D-nopaline + NADP(+) + H2O = L-arginine + 2-oxoglutarate + NADPH + H(+). The sequence is that of D-nopaline dehydrogenase (nos) from Agrobacterium tumefaciens (strain T37).